Reading from the N-terminus, the 780-residue chain is Ribosome biogenesis protein BOP1 homolog (780 aa).

A compositionally biased stretch (basic residues) spans 1-11; it reads MTKKQAIKRKV. The interval 1 to 155 is disordered; the sequence is MTKKQAIKRK…DSDTSDEEDI (155 aa). The span at 17–26 shows a compositional bias: polar residues; that stretch reads TNEQSSASEP. Composition is skewed to acidic residues over residues 44–53, 60–72, 83–113, and 145–154; these read EDTTDDEGID, SSEDLEFESDEEG, AEGDAEEDEDDDEEEDEDSDEASEDNDDAEE, and EDSDTSDEED. 7 WD repeats span residues 441-482, 484-522, 566-608, 611-649, 652-691, 695-734, and 750-780; these read GHTD…RTIE, NDVVRCVAWCPNAKLSIIAVATGSRLLLINPKVGDKLLI, THFK…SQIP, KSKGLIQCVLFHPVKPCFFVATQHNIRIYDLVKQELIKK, TNSKWISGMSIHPKGDNLLVSTYDKKMLWFDLDLSTKPYQ, LHRNAVRSVAFHLRYPLFASGSDDQAVIVSHGMVYNDLLQ, and RDEFGVLDVSWHPVQPWVFSTGADCTIRLYT.

The protein belongs to the WD repeat BOP1/ERB1 family.

It localises to the nucleus. The protein resides in the nucleolus. It is found in the nucleoplasm. Required for maturation of ribosomal RNAs and formation of the large ribosomal subunit. In Drosophila virilis (Fruit fly), this protein is Ribosome biogenesis protein BOP1 homolog.